We begin with the raw amino-acid sequence, 136 residues long: Small ribosomal subunit protein uS9 (136 aa).

Residues 103–116 show a composition bias toward basic and acidic residues; it reads PLKTEGHLSRDPRA. The segment at 103–136 is disordered; it reads PLKTEGHLSRDPRAKERRKYGLKKARKAPQFSKR. Positions 117 to 136 are enriched in basic residues; it reads KERRKYGLKKARKAPQFSKR.

This sequence belongs to the universal ribosomal protein uS9 family.

This Prochlorococcus marinus (strain SARG / CCMP1375 / SS120) protein is Small ribosomal subunit protein uS9 (rpsI).